A 941-amino-acid chain; its full sequence is ATP-dependent 6-phosphofructokinase subunit beta (941 aa).

Residues 2–558 form an N-terminal catalytic PFK domain 1 region; sequence PDASLFNGTS…HMKNFISTNS (557 aa). ATP is bound by residues glycine 191, 255–256, and 285–288; these read RC and GDGS. Aspartate 286 is a binding site for Mg(2+). Residues 331 to 333, arginine 368, and 375 to 377 each bind beta-D-fructose 6-phosphate; these read SID and MGR. The active-site Proton acceptor is aspartate 333. Residues isoleucine 395, 400-405, and glutamine 410 contribute to the ATP site; that span reads KPASSR. Residues glutamate 432, arginine 460, and 466–469 contribute to the beta-D-fructose 6-phosphate site; that span reads HVQR. Residue 557–558 participates in ATP binding; it reads NS. The tract at residues 559–572 is interdomain linker; sequence ADHVPPSLPLEKRK. Residues 573 to 941 form a C-terminal regulatory PFK domain 2 region; the sequence is KIAIINVGAP…SDMLSGRTSL (369 aa). Residues arginine 643, 701–705, arginine 739, 746–748, glutamate 806, lysine 832, 838–841, and arginine 918 each bind beta-D-fructose 2,6-bisphosphate; these read TISNN, QGG, and HVQQ.

It belongs to the phosphofructokinase type A (PFKA) family. ATP-dependent PFK group I subfamily. Eukaryotic two domain clade 'E' sub-subfamily. As to quaternary structure, heterododecamer of 4 alpha, 4 beta and 4 gamma chains. Requires Mg(2+) as cofactor.

It is found in the cytoplasm. It catalyses the reaction beta-D-fructose 6-phosphate + ATP = beta-D-fructose 1,6-bisphosphate + ADP + H(+). Its pathway is carbohydrate degradation; glycolysis; D-glyceraldehyde 3-phosphate and glycerone phosphate from D-glucose: step 3/4. Its activity is regulated as follows. Allosterically activated by ADP, AMP, or fructose 2,6-bisphosphate, and allosterically inhibited by ATP or citrate. In terms of biological role, catalyzes the phosphorylation of D-fructose 6-phosphate to fructose 1,6-bisphosphate by ATP, the first committing step of glycolysis. In Komagataella pastoris (Yeast), this protein is ATP-dependent 6-phosphofructokinase subunit beta (PFK2).